Here is a 352-residue protein sequence, read N- to C-terminus: Alanine racemase (352 aa).

The active-site Proton acceptor; specific for D-alanine is Lys-33. Lys-33 carries the post-translational modification N6-(pyridoxal phosphate)lysine. Residue Arg-129 coordinates substrate. Catalysis depends on Tyr-250, which acts as the Proton acceptor; specific for L-alanine. Met-298 is a substrate binding site.

The protein belongs to the alanine racemase family. It depends on pyridoxal 5'-phosphate as a cofactor.

It catalyses the reaction L-alanine = D-alanine. It functions in the pathway amino-acid biosynthesis; D-alanine biosynthesis; D-alanine from L-alanine: step 1/1. In terms of biological role, catalyzes the interconversion of L-alanine and D-alanine. May also act on other amino acids. In Neisseria gonorrhoeae (strain ATCC 700825 / FA 1090), this protein is Alanine racemase (alr).